A 207-amino-acid polypeptide reads, in one-letter code: SPRY domain-containing protein 4 (207 aa).

The region spanning 12-207 (YRWGTKRWGV…HSGLEVPKGL (196 aa)) is the B30.2/SPRY domain. An N6-acetyllysine mark is found at Lys53 and Lys130. Position 139 is an N6-succinyllysine (Lys139).

The polypeptide is SPRY domain-containing protein 4 (Spryd4) (Rattus norvegicus (Rat)).